Consider the following 163-residue polypeptide: Shikimate kinase (163 aa).

10 to 15 (GVGKTT) lines the ATP pocket. Thr-14 serves as a coordination point for Mg(2+). Substrate-binding residues include Asp-28, Arg-52, and Gly-75. Arg-116 is an ATP binding site. Arg-134 contributes to the substrate binding site. Arg-151 lines the ATP pocket.

It belongs to the shikimate kinase family. As to quaternary structure, monomer. It depends on Mg(2+) as a cofactor.

It is found in the cytoplasm. The enzyme catalyses shikimate + ATP = 3-phosphoshikimate + ADP + H(+). The protein operates within metabolic intermediate biosynthesis; chorismate biosynthesis; chorismate from D-erythrose 4-phosphate and phosphoenolpyruvate: step 5/7. Its function is as follows. Catalyzes the specific phosphorylation of the 3-hydroxyl group of shikimic acid using ATP as a cosubstrate. The chain is Shikimate kinase from Streptococcus pyogenes serotype M49 (strain NZ131).